The sequence spans 263 residues: Putative 2-aminoethylphosphonate transport system permease protein PhnV (263 aa).

6 helical membrane-spanning segments follow: residues 13-33, 69-89, 104-124, 131-151, 185-205, and 233-253; these read GVVA…VILM, LTIG…AALA, VFYL…LVAF, MNGT…AFTF, LPLL…LSMG, and NIAD…LLMM. Positions 65 to 253 constitute an ABC transmembrane type-1 domain; that stretch reads LLASLTIGFC…LVAITLLLMM (189 aa).

Belongs to the binding-protein-dependent transport system permease family.

Its subcellular location is the cell inner membrane. Its function is as follows. Probably part of the PhnSTUV complex (TC 3.A.1.11.5) involved in 2-aminoethylphosphonate import. Probably responsible for the translocation of the substrate across the membrane. The protein is Putative 2-aminoethylphosphonate transport system permease protein PhnV (phnV) of Salmonella typhi.